The sequence spans 20 residues: T cell receptor alpha joining 42 (20 aa).

The disordered stretch occupies residues 1–20; the sequence is YGGSQGNLIFGKGTKLSVKP.

As to quaternary structure, alpha-beta TR is a heterodimer composed of an alpha and beta chain; disulfide-linked. The alpha-beta TR is associated with the transmembrane signaling CD3 coreceptor proteins to form the TR-CD3 (TcR or TCR). The assembly of alpha-beta TR heterodimers with CD3 occurs in the endoplasmic reticulum where a single alpha-beta TR heterodimer associates with one CD3D-CD3E heterodimer, one CD3G-CD3E heterodimer and one CD247 homodimer forming a stable octameric structure. CD3D-CD3E and CD3G-CD3E heterodimers preferentially associate with TR alpha and TR beta chains, respectively. The association of the CD247 homodimer is the last step of TcR assembly in the endoplasmic reticulum and is required for transport to the cell surface.

Its subcellular location is the cell membrane. Its function is as follows. J region of the variable domain of T cell receptor (TR) alpha chain that participates in the antigen recognition. Alpha-beta T cell receptors are antigen specific receptors which are essential to the immune response and are present on the cell surface of T lymphocytes. Recognize peptide-major histocompatibility (MH) (pMH) complexes that are displayed by antigen presenting cells (APC), a prerequisite for efficient T cell adaptive immunity against pathogens. Binding of alpha-beta TR to pMH complex initiates TR-CD3 clustering on the cell surface and intracellular activation of LCK that phosphorylates the ITAM motifs of CD3G, CD3D, CD3E and CD247 enabling the recruitment of ZAP70. In turn, ZAP70 phosphorylates LAT, which recruits numerous signaling molecules to form the LAT signalosome. The LAT signalosome propagates signal branching to three major signaling pathways, the calcium, the mitogen-activated protein kinase (MAPK) kinase and the nuclear factor NF-kappa-B (NF-kB) pathways, leading to the mobilization of transcription factors that are critical for gene expression and essential for T cell growth and differentiation. The T cell repertoire is generated in the thymus, by V-(D)-J rearrangement. This repertoire is then shaped by intrathymic selection events to generate a peripheral T cell pool of self-MH restricted, non-autoaggressive T cells. Post-thymic interaction of alpha-beta TR with the pMH complexes shapes TR structural and functional avidity. This chain is T cell receptor alpha joining 42, found in Homo sapiens (Human).